The following is a 389-amino-acid chain: Lipid-A-disaccharide synthase (389 aa).

It belongs to the LpxB family.

The enzyme catalyses a lipid X + a UDP-2-N,3-O-bis[(3R)-3-hydroxyacyl]-alpha-D-glucosamine = a lipid A disaccharide + UDP + H(+). The protein operates within bacterial outer membrane biogenesis; LPS lipid A biosynthesis. Functionally, condensation of UDP-2,3-diacylglucosamine and 2,3-diacylglucosamine-1-phosphate to form lipid A disaccharide, a precursor of lipid A, a phosphorylated glycolipid that anchors the lipopolysaccharide to the outer membrane of the cell. The protein is Lipid-A-disaccharide synthase of Burkholderia ambifaria (strain ATCC BAA-244 / DSM 16087 / CCUG 44356 / LMG 19182 / AMMD) (Burkholderia cepacia (strain AMMD)).